The primary structure comprises 369 residues: tRNA pseudouridine synthase D (369 aa).

D80 serves as the catalytic Nucleophile. A TRUD domain is found at 156-318; the sequence is GIPNWFGEQR…LKQERRALRL (163 aa).

The protein belongs to the pseudouridine synthase TruD family.

It catalyses the reaction uridine(13) in tRNA = pseudouridine(13) in tRNA. In terms of biological role, responsible for synthesis of pseudouridine from uracil-13 in transfer RNAs. This chain is tRNA pseudouridine synthase D, found in Xanthomonas oryzae pv. oryzae (strain KACC10331 / KXO85).